Consider the following 251-residue polypeptide: MSAISSLVLIGWAMCLENSYKYYDPVLQPTNFYKPSTAAFLESRPLMFAPEQLSRNAILHNPVAFGEGNFYKLLYPSMTRLTSYLNDHSPLFGDWYRSPSLIMSKSDKEEVISGLYKAQPKGDKDLKEFWGFIMGELLIRDLPELKKSLGELKGIQNEERKKKSVAEFKDIADQKDNDENSFFGTAWFILDCLSLGVSNRNAEIYGDVIGPFVDAAIAFKSLEHNFSNIIGSSRSMSSYRTNSTEQIGSKK.

The first 15 residues, 1-15 (MSAISSLVLIGWAMC), serve as a signal peptide directing secretion. N-linked (GlcNAc...) asparagine glycosylation is found at Asn-225 and Asn-242.

This is an uncharacterized protein from Encephalitozoon cuniculi (strain GB-M1) (Microsporidian parasite).